The primary structure comprises 324 residues: IDS-like terpene synthase 2 (324 aa).

Mg(2+) contacts are provided by D77 and D81.

The protein belongs to the FPP/GGPP synthase family. It depends on Mg(2+) as a cofactor.

The enzyme catalyses (2E)-geranyl diphosphate = (E)-beta-ocimene + diphosphate. It carries out the reaction (2E,6E)-farnesyl diphosphate = (3E,6E)-alpha-farnesene + diphosphate. It catalyses the reaction (2E,6E,10E)-geranylgeranyl diphosphate = (E,E,E)-alpha-springene + diphosphate. Functionally, terpene synthase that shows monoterpene synthase activity and produces (E)-beta-ocimene as a major product, using geranyl diphosphate (GPP) as substrate. Also shows sesquiterpene synthase activity as it is able to convert farnesyl diphosphate (FPP) into (E,E)-alpha-farnesene. Finally, TPS2 can convert geranylgeranyl diphosphate into (E,E,E)-alpha-springene. The polypeptide is IDS-like terpene synthase 2 (Melampsora lini (Rust fungus)).